We begin with the raw amino-acid sequence, 387 residues long: Galactokinase (387 aa).

Residue 33-36 (EHTD) coordinates substrate. ATP contacts are provided by residues S67 and 123-129 (GAGLSSS). Mg(2+) contacts are provided by S129 and E161. Catalysis depends on D173, which acts as the Proton acceptor. Y223 is a substrate binding site.

It belongs to the GHMP kinase family. GalK subfamily.

It is found in the cytoplasm. It catalyses the reaction alpha-D-galactose + ATP = alpha-D-galactose 1-phosphate + ADP + H(+). Its pathway is carbohydrate metabolism; galactose metabolism. Catalyzes the transfer of the gamma-phosphate of ATP to D-galactose to form alpha-D-galactose-1-phosphate (Gal-1-P). The polypeptide is Galactokinase (Lacticaseibacillus casei (Lactobacillus casei)).